Reading from the N-terminus, the 203-residue chain is ATP-dependent Clp protease proteolytic subunit 1 (203 aa).

Catalysis depends on serine 98, which acts as the Nucleophile. The active site involves histidine 123.

This sequence belongs to the peptidase S14 family. In terms of assembly, fourteen ClpP subunits assemble into 2 heptameric rings which stack back to back to give a disk-like structure with a central cavity, resembling the structure of eukaryotic proteasomes.

It is found in the cytoplasm. It catalyses the reaction Hydrolysis of proteins to small peptides in the presence of ATP and magnesium. alpha-casein is the usual test substrate. In the absence of ATP, only oligopeptides shorter than five residues are hydrolyzed (such as succinyl-Leu-Tyr-|-NHMec, and Leu-Tyr-Leu-|-Tyr-Trp, in which cleavage of the -Tyr-|-Leu- and -Tyr-|-Trp bonds also occurs).. Cleaves peptides in various proteins in a process that requires ATP hydrolysis. Has a chymotrypsin-like activity. Plays a major role in the degradation of misfolded proteins. The protein is ATP-dependent Clp protease proteolytic subunit 1 of Chlamydia felis (strain Fe/C-56) (Chlamydophila felis).